Consider the following 217-residue polypeptide: dITP/XTP pyrophosphatase (217 aa).

7–12 (SRNKKK) provides a ligand contact to substrate. The active-site Proton acceptor is D72. Residue D72 coordinates Mg(2+). Substrate-binding positions include S73, 163–166 (FGYD), K195, and 200–201 (HR).

This sequence belongs to the HAM1 NTPase family. Homodimer. The cofactor is Mg(2+).

It carries out the reaction XTP + H2O = XMP + diphosphate + H(+). The catalysed reaction is dITP + H2O = dIMP + diphosphate + H(+). It catalyses the reaction ITP + H2O = IMP + diphosphate + H(+). In terms of biological role, pyrophosphatase that catalyzes the hydrolysis of nucleoside triphosphates to their monophosphate derivatives, with a high preference for the non-canonical purine nucleotides XTP (xanthosine triphosphate), dITP (deoxyinosine triphosphate) and ITP. Seems to function as a house-cleaning enzyme that removes non-canonical purine nucleotides from the nucleotide pool, thus preventing their incorporation into DNA/RNA and avoiding chromosomal lesions. In Corynebacterium jeikeium (strain K411), this protein is dITP/XTP pyrophosphatase.